The chain runs to 146 residues: 3-hydroxyacyl-[acyl-carrier-protein] dehydratase FabZ (146 aa).

His48 is a catalytic residue.

Belongs to the thioester dehydratase family. FabZ subfamily.

The protein localises to the cytoplasm. It carries out the reaction a (3R)-hydroxyacyl-[ACP] = a (2E)-enoyl-[ACP] + H2O. Involved in unsaturated fatty acids biosynthesis. Catalyzes the dehydration of short chain beta-hydroxyacyl-ACPs and long chain saturated and unsaturated beta-hydroxyacyl-ACPs. In Paracidovorax citrulli (strain AAC00-1) (Acidovorax citrulli), this protein is 3-hydroxyacyl-[acyl-carrier-protein] dehydratase FabZ.